Consider the following 330-residue polypeptide: Tryptophan--tRNA ligase (330 aa).

ATP-binding positions include 6–8 (QPT) and 14–15 (GN). Positions 7-15 (PTGSLHLGN) match the 'HIGH' region motif. Asp-130 contributes to the L-tryptophan binding site. Residues 142-144 (GED), Val-185, and 194-198 (KMSKS) contribute to the ATP site. The 'KMSKS' region signature appears at 194-198 (KMSKS).

The protein belongs to the class-I aminoacyl-tRNA synthetase family. In terms of assembly, homodimer.

The protein resides in the cytoplasm. It catalyses the reaction tRNA(Trp) + L-tryptophan + ATP = L-tryptophyl-tRNA(Trp) + AMP + diphosphate + H(+). Its function is as follows. Catalyzes the attachment of tryptophan to tRNA(Trp). The sequence is that of Tryptophan--tRNA ligase from Thermosynechococcus vestitus (strain NIES-2133 / IAM M-273 / BP-1).